Reading from the N-terminus, the 489-residue chain is Ribulose-1,5 bisphosphate carboxylase/oxygenase large subunit N-methyltransferase, chloroplastic (489 aa).

The transit peptide at 1–37 directs the protein to the chloroplast; it reads MATIFSGGSVSPFLFHTNKGTSFTPKAPILHLKRSFS. Residues 64–288 form the SET domain; the sequence is EGVITAKTPV…AGEQVYIQYD (225 aa). S-adenosyl-L-methionine contacts are provided by residues 80–82 and R222; that span reads EGL. 3 residues coordinate substrate: R222, R226, and D239. 242–243 contacts S-adenosyl-L-methionine; the sequence is NH. Substrate contacts are provided by Y254, Y287, and Y300.

Belongs to the class V-like SAM-binding methyltransferase superfamily. Plant protein-lysine LSMT methyltransferase family. As to quaternary structure, homotrimer. Highly expressed in leaf.

It localises to the plastid. The protein localises to the chloroplast. It catalyses the reaction L-lysyl-[ribulose-1,5-bisphosphate carboxylase] + 3 S-adenosyl-L-methionine = N(6),N(6),N(6)-trimethyl-L-lysyl-[ribulose-1,5-bisphosphate carboxylase] + 3 S-adenosyl-L-homocysteine + 3 H(+). The catalysed reaction is [fructose-bisphosphate aldolase]-L-lysine + 3 S-adenosyl-L-methionine = [fructose-bisphosphate aldolase]-N(6),N(6),N(6)-trimethyl-L-lysine + 3 S-adenosyl-L-homocysteine + 3 H(+). Methylates 'Lys-14' of the large subunit of RuBisCO. Can also use with lower efficiency chloroplastic fructose-bisphosphate aldolases and gamma-tocopherol methyltransferase as substrates, but not a cytosolic aldolase. The polypeptide is Ribulose-1,5 bisphosphate carboxylase/oxygenase large subunit N-methyltransferase, chloroplastic (RBCMT) (Pisum sativum (Garden pea)).